The following is a 1028-amino-acid chain: MDLNGETSTKRKRSSVAAPAERPAKHLKPESSTLTPGDATPANGTVYDVEDEEDTGRVMPIGPAQADSPEWQATIEKVVKSVVSIHFCQTCSFDTDLSMSSQATGFVVDAERGYILTNRHVVCAGPFWGYCIFDNHEECDVRPVYRDPVHDFGILKFDPKAIRYMELTELKLRPEAARVGCEIRVVGNDAGEKLSILSGVISRLDRNAPEYGDGYCDFNTNYIQAAAAASGGSSGSPVVNIDGHAIALQAGGRADGAATDYFLPLDRPLRALECIRRGEPVARGTIQTQWILKPFDECRRLGLTPEWEAAVRKASPHETSMLVAEIILPEGPADGKLEEGDVLLQVNGELLTQFIRLDDILDSSVGKTVRLLVQRGGQNVEVECEVGDLHAITPDRFVTVAGGTFHNLSYQQARLYAIAARGVYVCEAAGSFKLENTLSGWIIDAVDKRPTRNLDEFTEVMKTIPDRARVVISYRHIRDLHTRGTSIVYIDRHWHPKMRMAIRNDETGLWDFSDLADPVPAETPVPRKADFIQLDGVSQPAVADIVRSFVRVSCTMPLKLDGYPQAKKTGFGLVIDAEKGLVVVSRAIVPYNLCDINITVADSIIVAAKVIFLHPLQNYTIIQYDPSLVQAPVQSAKLSTEYIKQGQETIFVGFNQNFRIVVAKTAVTDITTVSIPANASAPRYRAINLDAITVDTGLSGQCTNGVLIGEDGVVQALWLNYLGERTPSSHKDVEYHLGFATPALLPVTSKIQQGIIPKLRILNMESYVVQMSQARIMGVSEEWIQKVAQANPSRHQLFMVRKVDCPPPQFTDNADSLQEGDIILTLDGQLITRVSELDKMYEKEVLDALIVRNGQEMHLKLPTVPTEDLETDRAVVFCGAVLQKPHHAVRQQISKLHSEVYVSARSRGSPAYQYGLAPTNFITAVNGVPTPNLDSFVREVSKIPDNTYFRLRAVTFDNVPWVVTMKKNDHYFPMSEYVKDPSQPLGWRTVSHDRDRHKDGITPDAANLNPDAMDEVYEEVSDVEPEVD.

Residues 1 to 46 (MDLNGETSTKRKRSSVAAPAERPAKHLKPESSTLTPGDATPANGTV) form a disordered region. Residues 82–266 (VVSIHFCQTC…AATDYFLPLD (185 aa)) form a serine protease region. Catalysis depends on charge relay system residues histidine 120, aspartate 151, and serine 233. PDZ domains follow at residues 305–377 (PEWE…QRGG) and 876–957 (VFCG…VTFD). Residues 989–1028 (TVSHDRDRHKDGITPDAANLNPDAMDEVYEEVSDVEPEVD) are disordered. A compositionally biased stretch (basic and acidic residues) spans 990-1001 (VSHDRDRHKDGI). Residues 1012 to 1028 (AMDEVYEEVSDVEPEVD) are compositionally biased toward acidic residues.

Belongs to the peptidase S1C family.

Its subcellular location is the nucleus. Functionally, nuclear serine protease which mediates apoptosis. The polypeptide is Pro-apoptotic serine protease nma111 (nma111) (Neosartorya fischeri (strain ATCC 1020 / DSM 3700 / CBS 544.65 / FGSC A1164 / JCM 1740 / NRRL 181 / WB 181) (Aspergillus fischerianus)).